A 319-amino-acid chain; its full sequence is Beta-ketoacyl-[acyl-carrier-protein] synthase III (319 aa).

Active-site residues include C113 and H246. The tract at residues 247 to 251 is ACP-binding; that stretch reads QANIR. N276 is a catalytic residue.

The protein belongs to the thiolase-like superfamily. FabH family. Homodimer.

It is found in the cytoplasm. The catalysed reaction is malonyl-[ACP] + acetyl-CoA + H(+) = 3-oxobutanoyl-[ACP] + CO2 + CoA. The protein operates within lipid metabolism; fatty acid biosynthesis. Catalyzes the condensation reaction of fatty acid synthesis by the addition to an acyl acceptor of two carbons from malonyl-ACP. Catalyzes the first condensation reaction which initiates fatty acid synthesis and may therefore play a role in governing the total rate of fatty acid production. Possesses both acetoacetyl-ACP synthase and acetyl transacylase activities. Its substrate specificity determines the biosynthesis of branched-chain and/or straight-chain of fatty acids. In Ehrlichia chaffeensis (strain ATCC CRL-10679 / Arkansas), this protein is Beta-ketoacyl-[acyl-carrier-protein] synthase III.